A 376-amino-acid polypeptide reads, in one-letter code: Cobalt-precorrin-5B C(1)-methyltransferase (376 aa).

A disordered region spans residues 353–376 (KGRTTSTPSHQPAPSSFGDRNRRT). A compositionally biased stretch (polar residues) spans 355 to 366 (RTTSTPSHQPAP).

It belongs to the CbiD family.

It carries out the reaction Co-precorrin-5B + S-adenosyl-L-methionine = Co-precorrin-6A + S-adenosyl-L-homocysteine. The protein operates within cofactor biosynthesis; adenosylcobalamin biosynthesis; cob(II)yrinate a,c-diamide from sirohydrochlorin (anaerobic route): step 6/10. In terms of biological role, catalyzes the methylation of C-1 in cobalt-precorrin-5B to form cobalt-precorrin-6A. This chain is Cobalt-precorrin-5B C(1)-methyltransferase, found in Agrobacterium fabrum (strain C58 / ATCC 33970) (Agrobacterium tumefaciens (strain C58)).